A 132-amino-acid chain; its full sequence is Small ribosomal subunit protein uS8 (132 aa).

In terms of assembly, part of the 30S ribosomal subunit. Contacts proteins S5 and S12. A modified and unmodified form exist; the nature of the modification(s) is unknown.

In terms of biological role, one of the primary rRNA binding proteins, it binds directly to 16S rRNA central domain where it helps coordinate assembly of the platform of the 30S subunit. The chain is Small ribosomal subunit protein uS8 from Rhodopseudomonas palustris (strain ATCC BAA-98 / CGA009).